Reading from the N-terminus, the 185-residue chain is Pro-adrenomedullin (185 aa).

Positions 1–21 (MKLVSIALMLLGSLAVLGADT) are cleaved as a signal peptide. Position 41 is an arginine amide (Arg41). A propeptide spanning residues 45-91 (ELQASSSYPTGLVDEKTVPTQTLGLQDKQSTSSTPQASTQSTAHIRV) is cleaved from the precursor. Residues 68 to 89 (GLQDKQSTSSTPQASTQSTAHI) are disordered. Residues 73-87 (QSTSSTPQASTQSTA) are compositionally biased toward low complexity. A disulfide bridge connects residues Cys107 and Cys112. The disordered stretch occupies residues 125 to 185 (TDKDKDGMAP…HQDISRVSRL (61 aa)). Tyr143 is subject to Tyrosine amide. Residues 150–185 (SLPEVLRARTVESSQEQTHSAPASPAHQDISRVSRL) constitute a propeptide, preproAM C-terminal fragment. A compositionally biased stretch (polar residues) spans 160 to 170 (VESSQEQTHSA).

It belongs to the adrenomedullin family. Expressed in adrenal glands, lung, kidney, heart, spleen, duodenum and submandibular glands.

It is found in the secreted. Adrenomedullin/ADM and proadrenomedullin N-20 terminal peptide/PAMP are peptide hormones that act as potent hypotensive and vasodilatator agents. Numerous actions have been reported most related to the physiologic control of fluid and electrolyte homeostasis. Its function is as follows. ADM function is mediated by the CALCRL-RAMP2 and CALCRL-RAMP3 receptor complexes with ADM showing the highest potency for the CALCRL-RAMP2 complex. The polypeptide is Pro-adrenomedullin (Rattus norvegicus (Rat)).